Consider the following 352-residue polypeptide: 3-isopropylmalate dehydrogenase (352 aa).

Substrate is bound by residues Arg-91, Arg-101, Arg-129, and Asp-218. Asp-218, Asp-242, and Asp-246 together coordinate Mg(2+). 281–293 (GSAPDIAGKGLAN) provides a ligand contact to NAD(+).

This sequence belongs to the isocitrate and isopropylmalate dehydrogenases family. LeuB type 1 subfamily. As to quaternary structure, homodimer. The cofactor is Mg(2+). Mn(2+) is required as a cofactor.

The protein localises to the cytoplasm. It catalyses the reaction (2R,3S)-3-isopropylmalate + NAD(+) = 4-methyl-2-oxopentanoate + CO2 + NADH. It functions in the pathway amino-acid biosynthesis; L-leucine biosynthesis; L-leucine from 3-methyl-2-oxobutanoate: step 3/4. Its function is as follows. Catalyzes the oxidation of 3-carboxy-2-hydroxy-4-methylpentanoate (3-isopropylmalate) to 3-carboxy-4-methyl-2-oxopentanoate. The product decarboxylates to 4-methyl-2 oxopentanoate. This is 3-isopropylmalate dehydrogenase from Novosphingobium aromaticivorans (strain ATCC 700278 / DSM 12444 / CCUG 56034 / CIP 105152 / NBRC 16084 / F199).